The following is a 536-amino-acid chain: MIENDNTFNKDEWEIIEKNYRKGGFSKISKAKKKNGIINGTIVNKKMIAIKKIKFDDKIQFNEVNNLELIKNKNKEMQISSIIDYFGYGIKGKNKLYIYLEFIEGKTIYELKKKKFPLNEKQISIILKKCLETMKFLHNNCNLIHMDLKCDNIILKPNNYDNNNNNNNNNNNNNNNNNNNSNINDDNNNSNSNINDDNNFDIKIIDYGLSQKIGDLKRDHYGTYLPDECILNNVSIVNYTFDVYSLGFISFELFYPTQFEIKPIKLTHIYEYVEKSQISPLFLNFIKKCIGRYLDIDVLEIHPFLNENYDNFENYFKFLKQTPLKRIKYRNGINGENDILRINNSTTITSEQFPNNSKMIEFGDDFNGIINVDYIANKKVVILNNPNYNIINLDFCFSNVEYICIKGIGVLEISKITHNSLETFIYEGEFKNDFILKPYLFTNTKHLILKNYKNYIRHRGIIPEGVTFLELSDSIGIEVIKTFIHLPKSIEELCFGCTEETLKQIERNLILQSINFFIINGKLMKFSKNNNLEYYE.

The region spanning 14–305 is the Protein kinase domain; it reads EIIEKNYRKG…IDVLEIHPFL (292 aa). ATP contacts are provided by residues 20 to 28 and Lys51; that span reads YRKGGFSKI. The active-site Proton acceptor is Asp147. Residues 161 to 192 form a disordered region; it reads DNNNNNNNNNNNNNNNNNNNSNINDDNNNSNS.

The protein belongs to the protein kinase superfamily. Ser/Thr protein kinase family. Mg(2+) is required as a cofactor.

The enzyme catalyses L-seryl-[protein] + ATP = O-phospho-L-seryl-[protein] + ADP + H(+). The catalysed reaction is L-threonyl-[protein] + ATP = O-phospho-L-threonyl-[protein] + ADP + H(+). This Dictyostelium discoideum (Social amoeba) protein is Probable serine/threonine-protein kinase DDB_G0268550.